A 333-amino-acid polypeptide reads, in one-letter code: Dihydroorotate dehydrogenase (quinone) (333 aa).

Residues Ala-56 to Lys-60 and Thr-80 contribute to the FMN site. Lys-60 lines the substrate pocket. Asn-105–Phe-109 provides a ligand contact to substrate. Asn-133 and Asn-166 together coordinate FMN. Position 166 (Asn-166) interacts with substrate. Residue Ser-169 is the Nucleophile of the active site. Asn-171 contributes to the substrate binding site. 2 residues coordinate FMN: Lys-211 and Thr-239. Position 240–241 (Asn-240–Thr-241) interacts with substrate. Residues Gly-262, Gly-291, and Tyr-312 to Ser-313 each bind FMN.

Belongs to the dihydroorotate dehydrogenase family. Type 2 subfamily. As to quaternary structure, monomer. FMN serves as cofactor.

The protein localises to the cell membrane. The enzyme catalyses (S)-dihydroorotate + a quinone = orotate + a quinol. It participates in pyrimidine metabolism; UMP biosynthesis via de novo pathway; orotate from (S)-dihydroorotate (quinone route): step 1/1. Its function is as follows. Catalyzes the conversion of dihydroorotate to orotate with quinone as electron acceptor. In Legionella pneumophila (strain Corby), this protein is Dihydroorotate dehydrogenase (quinone).